Consider the following 228-residue polypeptide: uncharacterized protein (228 aa).

21–28 (GMIALGKT) is an ATP binding site.

This is an uncharacterized protein from Mycoplasma genitalium (strain ATCC 33530 / DSM 19775 / NCTC 10195 / G37) (Mycoplasmoides genitalium).